A 448-amino-acid chain; its full sequence is Squalene synthase ERG9 (448 aa).

Residues 428 to 448 (CNVVLFGIGALILSLIYFVLY) form a helical membrane-spanning segment.

It belongs to the phytoene/squalene synthase family. Mg(2+) is required as a cofactor.

Its subcellular location is the endoplasmic reticulum membrane. The protein localises to the microsome. The enzyme catalyses 2 (2E,6E)-farnesyl diphosphate + NADPH + H(+) = squalene + 2 diphosphate + NADP(+). It carries out the reaction 2 (2E,6E)-farnesyl diphosphate + NADH + H(+) = squalene + 2 diphosphate + NAD(+). It participates in terpene metabolism; lanosterol biosynthesis; lanosterol from farnesyl diphosphate: step 1/3. Squalene synthase; part of the third module of ergosterol biosynthesis pathway that includes the late steps of the pathway. ERG9 produces squalene from 2 farnesyl pyrophosphate moieties. The third module or late pathway involves the ergosterol synthesis itself through consecutive reactions that mainly occur in the endoplasmic reticulum (ER) membrane. Firstly, the squalene synthase ERG9 catalyzes the condensation of 2 farnesyl pyrophosphate moieties to form squalene, which is the precursor of all steroids. Squalene synthase is crucial for balancing the incorporation of farnesyl diphosphate (FPP) into sterol and nonsterol isoprene synthesis. Secondly, the squalene epoxidase ERG1 catalyzes the stereospecific oxidation of squalene to (S)-2,3-epoxysqualene, which is considered to be a rate-limiting enzyme in steroid biosynthesis. Then, the lanosterol synthase ERG7 catalyzes the cyclization of (S)-2,3 oxidosqualene to lanosterol, a reaction that forms the sterol core. In the next steps, lanosterol is transformed to zymosterol through a complex process involving various demethylation, reduction and desaturation reactions. The lanosterol 14-alpha-demethylase ERG11 (also known as CYP51) catalyzes C14-demethylation of lanosterol to produce 4,4'-dimethyl cholesta-8,14,24-triene-3-beta-ol, which is critical for ergosterol biosynthesis. The C-14 reductase ERG24 reduces the C14=C15 double bond of 4,4-dimethyl-cholesta-8,14,24-trienol to produce 4,4-dimethyl-cholesta-8,24-dienol. 4,4-dimethyl-cholesta-8,24-dienol is substrate of the C-4 demethylation complex ERG25-ERG26-ERG27 in which ERG25 catalyzes the three-step monooxygenation required for the demethylation of 4,4-dimethyl and 4alpha-methylsterols, ERG26 catalyzes the oxidative decarboxylation that results in a reduction of the 3-beta-hydroxy group at the C-3 carbon to an oxo group, and ERG27 is responsible for the reduction of the keto group on the C-3. ERG28 has a role as a scaffold to help anchor ERG25, ERG26 and ERG27 to the endoplasmic reticulum and ERG29 regulates the activity of the iron-containing C4-methylsterol oxidase ERG25. Then, the sterol 24-C-methyltransferase ERG6 catalyzes the methyl transfer from S-adenosyl-methionine to the C-24 of zymosterol to form fecosterol. The C-8 sterol isomerase ERG2 catalyzes the reaction which results in unsaturation at C-7 in the B ring of sterols and thus converts fecosterol to episterol. The sterol-C5-desaturase ERG3 then catalyzes the introduction of a C-5 double bond in the B ring to produce 5-dehydroepisterol. The C-22 sterol desaturase ERG5 further converts 5-dehydroepisterol into ergosta-5,7,22,24(28)-tetraen-3beta-ol by forming the C-22(23) double bond in the sterol side chain. Finally, ergosta-5,7,22,24(28)-tetraen-3beta-ol is substrate of the C-24(28) sterol reductase ERG4 to produce ergosterol. This is Squalene synthase ERG9 from Candida albicans (strain SC5314 / ATCC MYA-2876) (Yeast).